The chain runs to 189 residues: uncharacterized protein (189 aa).

Residues 1-15 (MDKHGVKTPLWRKEV) show a composition bias toward basic and acidic residues. The disordered stretch occupies residues 1-77 (MDKHGVKTPL…SPLRQESSSQ (77 aa)). Acidic residues-rich tracts occupy residues 16-29 (EDPE…EDDS) and 46-56 (SATETEEDSRD). Positions 65–77 (VSYSPLRQESSSQ) are enriched in polar residues.

This is an uncharacterized protein from Mus musculus (Mouse).